The chain runs to 606 residues: MAKIVGIDLGTTNSLIAYLEGGRPTIIPNAEGSRLTPSVVAFTKDGQLLVGEPAKRQAIVNAERTIKSIKRHMGTNYKVKIDDKEYTPQEISAMILRKLKKDAEAYLGEPIEKAVITVPAYFSDAQRQATKDAGAIAGLEVVRIINEPTAAALAYGLDKEGHQKILVFDLGGGTFDVSILEIGEGVFEVIATAGNNRLGGDDFDERIVNWLVEMFMEEHGINLKEDRTALQRLFEAAEKAKIELSSKLQTEINLPFIAMKGNTPLHISVTLTRAKFEELTYDLVEKTKEPTERALKDAGLSPSQIDKIILVGGATRMPCIQEWIKKHFGKEPQRNVNPDEAVALGAAIQAGVIGGEIRDIVLVDVTPLSLGIETLGGVFTKIIERNTPIPVSKSQIFTTAADYQTSVEIHVLQGERALAKDNISLGRFILDGIPPAPRGVPQIEVTFDIDVNGIVHVSARDKATGREQRITISNAIRLSEEEIKRMTEEAKRFEEEDRKRREEIETKNQAEHLIYTARKTLKDYGDKVSKDLVQRVEDKIKNLEELIKPERINVEQVKKGMEELTQALGEIGQFMYQSASAAGNPGQGQTNENPGGKTIDGDYKVN.

Thr-174 carries the post-translational modification Phosphothreonine; by autocatalysis. Residues 579–593 (ASAAGNPGQGQTNEN) show a composition bias toward polar residues. The tract at residues 579–606 (ASAAGNPGQGQTNENPGGKTIDGDYKVN) is disordered.

The protein belongs to the heat shock protein 70 family.

Functionally, acts as a chaperone. This is Chaperone protein DnaK from Dictyoglomus thermophilum (strain ATCC 35947 / DSM 3960 / H-6-12).